The following is a 192-amino-acid chain: Probable nicotinate-nucleotide adenylyltransferase (192 aa).

This sequence belongs to the NadD family.

It catalyses the reaction nicotinate beta-D-ribonucleotide + ATP + H(+) = deamido-NAD(+) + diphosphate. Its pathway is cofactor biosynthesis; NAD(+) biosynthesis; deamido-NAD(+) from nicotinate D-ribonucleotide: step 1/1. In terms of biological role, catalyzes the reversible adenylation of nicotinate mononucleotide (NaMN) to nicotinic acid adenine dinucleotide (NaAD). The sequence is that of Probable nicotinate-nucleotide adenylyltransferase from Rhizobium leguminosarum bv. trifolii (strain WSM2304).